We begin with the raw amino-acid sequence, 204 residues long: Peptide deformylase (204 aa).

Residues Cys-131 and His-174 each coordinate Fe cation. Glu-175 is a catalytic residue. His-178 lines the Fe cation pocket.

This sequence belongs to the polypeptide deformylase family. Fe(2+) is required as a cofactor.

It catalyses the reaction N-terminal N-formyl-L-methionyl-[peptide] + H2O = N-terminal L-methionyl-[peptide] + formate. In terms of biological role, removes the formyl group from the N-terminal Met of newly synthesized proteins. Requires at least a dipeptide for an efficient rate of reaction. N-terminal L-methionine is a prerequisite for activity but the enzyme has broad specificity at other positions. The protein is Peptide deformylase of Streptococcus agalactiae serotype III (strain NEM316).